The primary structure comprises 913 residues: WD repeat-containing protein 44 (913 aa).

The segment covering 1–14 (MASESDTEEFYDAP) has biased composition (acidic residues). The disordered stretch occupies residues 1-24 (MASESDTEEFYDAPEDVHLGGGYP). The residue at position 2 (A2) is an N-acetylalanine. The segment at 2 to 170 (ASESDTEEFY…SSTEQLNVLE (169 aa)) is binding activity. S3 bears the Phosphoserine mark. The short motif at 9 to 15 (EFYDAPE) is the FFAT-like motif element. Y11 bears the Phosphotyrosine mark. Phosphoserine is present on residues S27, S50, S66, S71, S81, S96, and S126. Residues 119 to 184 (EESQKAESQN…VLNKEAVEVK (66 aa)) adopt a coiled-coil conformation. T158 and T219 each carry phosphothreonine. Residues 205 to 348 (AVEEVAPAKP…RPRSNSGREL (144 aa)) are disordered. Residues 211-257 (PAKPPRHLTPEPDIVASTKKPVPARPPPPTNFPPPRPPPPSRPAPPP) are important for interaction with ARHGAP26 AND ARHGAP10. The span at 233 to 256 (PARPPPPTNFPPPRPPPPSRPAPP) shows a compositional bias: pro residues. Phosphoserine is present on S262. The span at 262-278 (SELEFETLKTPDIDVPK) shows a compositional bias: basic and acidic residues. T271 carries the phosphothreonine modification. Over residues 280-311 (NITSDSLLTASMASESTVKDSQPSLDLASATS) the composition is skewed to polar residues. The important for interaction with RAB11A stretch occupies residues 334 to 347 (VMGPQRPRSNSGRE). Phosphoserine; by PKB/AKT1 is present on residues S342 and S344. The residue at position 349 (T349) is a Phosphothreonine. Disordered regions lie at residues 397–424 (SNDA…LKQK) and 459–480 (DEVF…MPYT). Phosphoserine occurs at positions 403, 470, 471, and 472. A compositionally biased stretch (acidic residues) spans 467-476 (DDPSSSDDEG). Residue Y479 is modified to Phosphotyrosine. The stretch at 509–548 (EHMGAVWTMKFSHCGRLLASAGQDNVVRIWALKNAFDYFN) is one WD 1 repeat. A disordered region spans residues 557–593 (EGRVSPSPSQESLSSSKSDTDTGVCSGTDEDPDDKNA). Phosphoserine is present on residues S561 and S565. The span at 561–573 (SPSPSQESLSSSK) shows a compositional bias: low complexity. WD repeat units follow at residues 605 to 643 (GHTA…CLCC), 645 to 685 (QHID…VALW), 690 to 729 (GQTK…YHTQ), 740 to 779 (KVGR…LSMK), 784 to 823 (VNSS…SKFT), and 876 to 913 (VLDA…KNVS).

As to quaternary structure, interacts with the GTP-bound form of RAB11A and RAB11B. Interacts with GRAF1/ARHGAP26 or GRAF2/ARHGAP10; the interaction connects the endoplasmic reticulum (ER) with the endosomal tubule. Interacts (via FFAT-like motif) with VAPA (via MSP domain) or VAPB (via MSP domain); the interaction connects the ER with the endosomal tubule. Does not bind to RAB7, RAB10, RAB14, RAB35 and RAB8A. In terms of processing, phosphorylated by ATK1; the phosphorylation stabilizes its interaction with RAB11A and RAB11B.

It localises to the cytoplasm. It is found in the cytosol. The protein localises to the perinuclear region. Its subcellular location is the endosome membrane. The protein resides in the golgi apparatus. It localises to the trans-Golgi network. Its function is as follows. Downstream effector for Rab11 which regulates Rab11 intracellular membrane trafficking functions such as endocytic recycling, intracellular ciliogenesis and protein export. ATK1-mediated phosphorylation of WDR44 induces binding to Rab11 which activates endocytic recycling of transferrin receptor back to the plasma membrane. When bound to Rab11, prevents the formation of the ciliogenic Rab11-Rabin8/RAB3IP-RAB11FIP3 complex, therefore inhibiting preciliary trafficking and ciliogenesis. Participates in neo-synthesized protein export by connecting the endoplasmic reticulum (ER) with the endosomal tubule via direct interactions with the integral ER proteins VAPA or VAPB and the endosomal protein GRAFs (GRAF1/ARHGAP26 or GRAF2/ARHGAP10), which facilitates the transfer of proteins such as E-cadherin, MPP14 and CFTR into a Rab8-Rab10-Rab11-dependent export route. The protein is WD repeat-containing protein 44 of Homo sapiens (Human).